Consider the following 207-residue polypeptide: Large ribosomal subunit protein uL4 (207 aa).

Positions 52–76 (KNTSLVSGGGKKPWKQKGTGRARQG) are disordered.

The protein belongs to the universal ribosomal protein uL4 family. Part of the 50S ribosomal subunit.

Functionally, one of the primary rRNA binding proteins, this protein initially binds near the 5'-end of the 23S rRNA. It is important during the early stages of 50S assembly. It makes multiple contacts with different domains of the 23S rRNA in the assembled 50S subunit and ribosome. Its function is as follows. Forms part of the polypeptide exit tunnel. This is Large ribosomal subunit protein uL4 from Myxococcus xanthus (strain DK1622).